The chain runs to 216 residues: Cytidylate kinase (216 aa).

9–17 (GPAASGKGT) serves as a coordination point for ATP.

It belongs to the cytidylate kinase family. Type 1 subfamily.

The protein resides in the cytoplasm. It carries out the reaction CMP + ATP = CDP + ADP. The enzyme catalyses dCMP + ATP = dCDP + ADP. The chain is Cytidylate kinase from Caulobacter sp. (strain K31).